Here is a 902-residue protein sequence, read N- to C-terminus: Cysteine-tryptophan domain-containing zinc finger protein 3 (902 aa).

The CW-type zinc-finger motif lies at valine 21–threonine 74. Zn(2+) contacts are provided by cysteine 30, cysteine 33, cysteine 54, and cysteine 66. 4 disordered regions span residues glutamate 131–histidine 233, glutamate 326–leucine 345, glutamine 420–aspartate 480, and histidine 537–proline 651. 2 stretches are compositionally biased toward basic and acidic residues: residues lysine 151–serine 169 and serine 193–lysine 203. The segment covering serine 204–arginine 213 has biased composition (basic residues). 2 stretches are compositionally biased toward basic and acidic residues: residues arginine 214–histidine 233 and histidine 335–leucine 345. Low complexity predominate over residues serine 421–serine 433. 3 stretches are compositionally biased toward polar residues: residues glutamate 450 to aspartate 463, asparagine 564 to methionine 588, and isoleucine 599 to aspartate 611. A compositionally biased stretch (basic and acidic residues) spans asparagine 612–threonine 625. Polar residues predominate over residues lysine 634 to serine 648.

As to expression, expressed in leaf sheaths, flag leaves, nodes, internodes and panicles.

Its subcellular location is the nucleus. Binds to histones H3K4me1, H3K4me2 and H3K4me3 in GST pull-down assay. May facilitate the recruitment of effectors to mediate gene expression. The protein is Cysteine-tryptophan domain-containing zinc finger protein 3 of Oryza sativa subsp. japonica (Rice).